The chain runs to 338 residues: Anthranilate phosphoribosyltransferase (338 aa).

Residues G81, 84–85 (GD), T89, 91–94 (NIST), 109–117 (KHGNRALSS), and A121 contribute to the 5-phospho-alpha-D-ribose 1-diphosphate site. G81 contributes to the anthranilate binding site. S93 is a binding site for Mg(2+). N112 contacts anthranilate. R167 is a binding site for anthranilate. Positions 225 and 226 each coordinate Mg(2+).

It belongs to the anthranilate phosphoribosyltransferase family. In terms of assembly, homodimer. Requires Mg(2+) as cofactor.

The enzyme catalyses N-(5-phospho-beta-D-ribosyl)anthranilate + diphosphate = 5-phospho-alpha-D-ribose 1-diphosphate + anthranilate. Its pathway is amino-acid biosynthesis; L-tryptophan biosynthesis; L-tryptophan from chorismate: step 2/5. Its function is as follows. Catalyzes the transfer of the phosphoribosyl group of 5-phosphorylribose-1-pyrophosphate (PRPP) to anthranilate to yield N-(5'-phosphoribosyl)-anthranilate (PRA). The polypeptide is Anthranilate phosphoribosyltransferase (Rhizobium johnstonii (strain DSM 114642 / LMG 32736 / 3841) (Rhizobium leguminosarum bv. viciae)).